Here is a 311-residue protein sequence, read N- to C-terminus: tRNA dimethylallyltransferase (311 aa).

ATP is bound at residue 11–18; that stretch reads GPTAVGKT. 13–18 contacts substrate; it reads TAVGKT. The interval 36–39 is interaction with substrate tRNA; sequence DSMQ.

It belongs to the IPP transferase family. Monomer. The cofactor is Mg(2+).

It catalyses the reaction adenosine(37) in tRNA + dimethylallyl diphosphate = N(6)-dimethylallyladenosine(37) in tRNA + diphosphate. Its function is as follows. Catalyzes the transfer of a dimethylallyl group onto the adenine at position 37 in tRNAs that read codons beginning with uridine, leading to the formation of N6-(dimethylallyl)adenosine (i(6)A). The sequence is that of tRNA dimethylallyltransferase from Clostridioides difficile (strain 630) (Peptoclostridium difficile).